Consider the following 1888-residue polypeptide: Zinc finger protein 106 (1888 aa).

A C2H2-type 1; atypical zinc finger spans residues 5-29 (RKCILCHIVYGSKKEMDEHMRSMLH). Residues 43–67 (HECRVCRVTEVGLSAYAKHISGQLH) form a C2H2-type 2; atypical zinc finger. Residues 68 to 187 (KDNVDAQERE…GPRGSSVWHK (120 aa)) are disordered. A compositionally biased stretch (acidic residues) spans 75–89 (EREDDGKEEEEEEYF). Composition is skewed to basic and acidic residues over residues 90–108 (DKELVQLIQERKEQSRQDE), 118–138 (SDDRQPQWRREDRIPYQDRES), and 150–160 (PQRDWKWEKDG). K91 is covalently cross-linked (Glycyl lysine isopeptide (Lys-Gly) (interchain with G-Cter in SUMO2)). K155 is covalently cross-linked (Glycyl lysine isopeptide (Lys-Gly) (interchain with G-Cter in SUMO2)). A compositionally biased stretch (polar residues) spans 161 to 175 (FNSTRKNSFPHSLRN). Glycyl lysine isopeptide (Lys-Gly) (interchain with G-Cter in SUMO2) cross-links involve residues K265 and K309. 2 disordered regions span residues 287 to 326 (KKSNKPSKYSQERCKWQRQDRDKAAKYRSPPEGYASDTFP) and 338 to 362 (RESQTTKQTDTAASKINGKNGTKAR). Residues 296 to 311 (SQERCKWQRQDRDKAA) show a composition bias toward basic and acidic residues. Polar residues predominate over residues 342–357 (TTKQTDTAASKINGKN). Residues K375, K384, K390, K435, K469, and K479 each participate in a glycyl lysine isopeptide (Lys-Gly) (interchain with G-Cter in SUMO2) cross-link. Disordered regions lie at residues 410–437 (KPVDKTSNPPVIKTQKAGPPGSPSHKAI) and 453–525 (TEQS…TSKS). A compositionally biased stretch (basic residues) spans 481–491 (GPHKQNLKNRS). Over residues 507 to 525 (LLNTSTLEGSHGSSYTSKS) the composition is skewed to polar residues. Glycyl lysine isopeptide (Lys-Gly) (interchain with G-Cter in SUMO2) cross-links involve residues K524, K534, and K544. Positions 537-617 (KTVSGTQKEP…SAMTSDAENH (81 aa)) are disordered. A compositionally biased stretch (polar residues) spans 551-572 (NNTSQKAQDTVLQCPKTLQNPL). K577 participates in a covalent cross-link: Glycyl lysine isopeptide (Lys-Gly) (interchain with G-Cter in SUMO2). A compositionally biased stretch (basic and acidic residues) spans 577–593 (KRMENDAKESSVEESAK). Residues 597-613 (SIESQPHSAGNSAMTSD) are compositionally biased toward polar residues. K620 is covalently cross-linked (Glycyl lysine isopeptide (Lys-Gly) (interchain with G-Cter in SUMO2)). Residues 635–661 (STHTVDKEQGSQIPGTPENLSTSPRNS) are disordered. A compositionally biased stretch (polar residues) spans 644 to 661 (GSQIPGTPENLSTSPRNS). A phosphoserine mark is found at S657 and S677. Residues K687, K700, K721, K738, K758, K792, and K824 each participate in a glycyl lysine isopeptide (Lys-Gly) (interchain with G-Cter in SUMO2) cross-link. Residues 696-728 (NNLVKSDGPFETESFEDTSLDTELQKPDLNNQP) are disordered. Phosphoserine is present on residues S876, S878, S881, and S909. Positions 894–920 (TGEGTGKENEAQQSPSPNTALSAAQSQ) are disordered. The segment covering 904 to 920 (AQQSPSPNTALSAAQSQ) has biased composition (polar residues). A Glycyl lysine isopeptide (Lys-Gly) (interchain with G-Cter in SUMO2) cross-link involves residue K921. S953 carries the phosphoserine modification. Residues 968–986 (ARDLHSQERSTPLSERHAQ) show a composition bias toward basic and acidic residues. Disordered stretches follow at residues 968–1064 (ARDL…ERSQ), 1281–1461 (EQGN…SKKD), and 1468–1487 (QNPIETSRSGCDEVSSTSEL). The segment covering 992–1008 (GNSLSSNASSGHAVSSL) has biased composition (low complexity). The span at 1013 to 1022 (TDSSCTSGAE) shows a compositional bias: polar residues. A Phosphothreonine modification is found at T1036. S1040, S1041, and S1046 each carry phosphoserine. Over residues 1050–1060 (KNKRRKIKGKK) the composition is skewed to basic residues. Over residues 1281–1296 (EQGNSRSKGNSPSCQS) the composition is skewed to polar residues. A phosphoserine mark is found at S1291, S1293, and S1296. A Glycyl lysine isopeptide (Lys-Gly) (interchain with G-Cter in SUMO2) cross-link involves residue K1310. Over residues 1312-1321 (SSGSEACSSS) the composition is skewed to low complexity. S1313 bears the Phosphoserine mark. Residue K1335 forms a Glycyl lysine isopeptide (Lys-Gly) (interchain with G-Cter in SUMO2) linkage. The segment covering 1338 to 1354 (QSPADQPEQQAESTLAS) has biased composition (polar residues). At S1339 the chain carries Phosphoserine. Over residues 1360 to 1373 (SKKKKKLRKKKTLR) the composition is skewed to basic residues. S1381 is modified (phosphoserine). A Phosphothreonine modification is found at T1383. Residues K1391, K1403, K1406, and K1460 each participate in a glycyl lysine isopeptide (Lys-Gly) (interchain with G-Cter in SUMO2) cross-link. Basic and acidic residues predominate over residues 1450-1461 (GDEKPDSPSKKD). Residues 1470–1487 (PIETSRSGCDEVSSTSEL) show a composition bias toward polar residues. S1474 is subject to Phosphoserine. Residues K1492 and K1509 each participate in a glycyl lysine isopeptide (Lys-Gly) (interchain with G-Cter in SUMO2) cross-link. Positions 1509–1531 (KASKHSSEISSEPGDDEEPTEGS) are disordered. 6 WD repeats span residues 1534-1573 (GHQAAVNAIQIFGNFLYTCSADTTVRVYNLVSRKCVGVFE), 1575-1618 (HTSK…EQLQ), 1659-1700 (HGPR…LLRT), 1703-1742 (GHSKTVLCMKVVNDLVFSGSSDQSVHAHNIHTGELVRIYK), 1743-1780 (GHNHAVTVVNILGKVMVTACLDKFVRVYELQSHDRLQV), and 1783-1820 (GHKDMIMCMTIHKSVIYTGCYDGSIQAVRLNLMQNYRC). Residue K1590 forms a Glycyl lysine isopeptide (Lys-Gly) (interchain with G-Cter in SUMO2) linkage. K1742 is covalently cross-linked (Glycyl lysine isopeptide (Lys-Gly) (interchain with G-Cter in SUMO2)). The segment at 1818–1843 (YRCWWYGCTLIFGVVDHLKQHLLTDH) adopts a C2H2-type 3; atypical zinc-finger fold. A Glycyl lysine isopeptide (Lys-Gly) (interchain with G-Cter in SUMO2) cross-link involves residue K1869.

In terms of assembly, interacts with KNOP1. Interacts with TARDBP and NUP107. Interacts (via N-terminus) with RBM39. Interacts with the SH3 domains of FYN and GRB2. In terms of processing, phosphorylated by FYN in vitro. As to expression, widely expressed, with strongest expression in skeletal muscle, heart and brain (at protein level). Detected in spinal cord motor neurons.

It localises to the nucleus. The protein localises to the nucleolus. The protein resides in the nucleus speckle. RNA-binding protein. Specifically binds to 5'-GGGGCC-3' sequence repeats in RNA. Essential for maintenance of peripheral motor neuron and skeletal muscle function. Required for normal expression and/or alternative splicing of a number of genes in spinal cord and skeletal muscle, including the neurite outgrowth inhibitor RTN4. Also contributes to normal mitochondrial respiratory function in motor neurons, via an unknown mechanism. The polypeptide is Zinc finger protein 106 (Znf106) (Mus musculus (Mouse)).